The following is a 179-amino-acid chain: Shikimate kinase (179 aa).

15–20 contacts ATP; sequence GAGKTS. T19 is a binding site for Mg(2+). D37, R61, and G83 together coordinate substrate. R122 serves as a coordination point for ATP. R142 lines the substrate pocket.

Belongs to the shikimate kinase family. As to quaternary structure, monomer. Mg(2+) serves as cofactor.

It is found in the cytoplasm. It catalyses the reaction shikimate + ATP = 3-phosphoshikimate + ADP + H(+). The protein operates within metabolic intermediate biosynthesis; chorismate biosynthesis; chorismate from D-erythrose 4-phosphate and phosphoenolpyruvate: step 5/7. Functionally, catalyzes the specific phosphorylation of the 3-hydroxyl group of shikimic acid using ATP as a cosubstrate. This Coxiella burnetii (strain RSA 331 / Henzerling II) protein is Shikimate kinase.